The sequence spans 475 residues: UDP-N-acetylmuramate--L-alanine ligase (475 aa).

ATP is bound at residue 114–120 (GTHGKTT).

The protein belongs to the MurCDEF family.

It localises to the cytoplasm. It catalyses the reaction UDP-N-acetyl-alpha-D-muramate + L-alanine + ATP = UDP-N-acetyl-alpha-D-muramoyl-L-alanine + ADP + phosphate + H(+). It participates in cell wall biogenesis; peptidoglycan biosynthesis. In terms of biological role, cell wall formation. The sequence is that of UDP-N-acetylmuramate--L-alanine ligase from Bartonella quintana (strain Toulouse) (Rochalimaea quintana).